Here is a 525-residue protein sequence, read N- to C-terminus: Lymphocyte activation gene 3 protein (525 aa).

A signal peptide spans M1–P22. At L23–L450 the chain is on the extracellular side. The 131-residue stretch at G37–G167 folds into the Ig-like V-type domain. Positions G37–S252 are interaction with FGL1. Residues C44 and C160 are joined by a disulfide bond. The tract at residues T62–R97 is disordered. Residues S69–A87 are compositionally biased toward pro residues. In terms of domain architecture, Ig-like C2-type 1 spans Q168–S252. N188 is a glycosylation site (N-linked (GlcNAc...) asparagine). Cysteines 189 and 241 form a disulfide. Residues N250 and N256 are each glycosylated (N-linked (GlcNAc...) asparagine). Ig-like C2-type domains are found at residues P265 to N343 and L348 to R419. A disulfide bridge connects residues C282 and C333. The N-linked (GlcNAc...) asparagine glycan is linked to N343. Cysteines 369 and 412 form a disulfide. Residues E429 to L450 are connecting peptide. The chain crosses the membrane as a helical span at residues L451–F471. Topologically, residues H472–L525 are cytoplasmic. The tract at residues E487–L525 is disordered. The KIEELE motif motif lies at K498–E503. A 12 X 2 AA tandem repeats of E-X region spans residues E501 to Q524. Residues L502 to L525 show a composition bias toward acidic residues.

The protein belongs to the LAG3 family. In terms of assembly, interacts with MHC class II (MHC-II); selectively recognizes stable complexes of peptide and MHC-II. Interacts with FGL1 (via the Fibrinogen C-terminal domain). In terms of processing, proteolytically cleaved by ADAM10 and ADAM17 within the connecting peptide region, leading to release of Secreted lymphocyte activation gene 3 protein (sLAG-3). ADAM10 mediates constitutive cleavage, but cleavage increases following T-cell activation, whereas shedding by ADAM17 is induced by TCR signaling in a PRKCQ-dependent manner. Primarily expressed in activated T-cells and a subset of natural killer (NK) cells.

Its subcellular location is the cell membrane. The protein resides in the secreted. Its function is as follows. Lymphocyte activation gene 3 protein: Inhibitory receptor on antigen activated T-cells. Delivers inhibitory signals upon binding to ligands, such as FGL1. FGL1 constitutes a major ligand of LAG3 and is responsible for LAG3 T-cell inhibitory function. Following TCR engagement, LAG3 associates with CD3-TCR in the immunological synapse and directly inhibits T-cell activation. May inhibit antigen-specific T-cell activation in synergy with PDCD1/PD-1, possibly by acting as a coreceptor for PDCD1/PD-1. Negatively regulates the proliferation, activation, effector function and homeostasis of both CD8(+) and CD4(+) T-cells. Also mediates immune tolerance: constitutively expressed on a subset of regulatory T-cells (Tregs) and contributes to their suppressive function. Also acts as a negative regulator of plasmacytoid dendritic cell (pDCs) activation. Binds MHC class II (MHC-II); the precise role of MHC-II-binding is however unclear. May function as a ligand for MHC class II (MHC-II) on antigen-presenting cells (APC), promoting APC activation/maturation and driving Th1 immune response. The chain is Lymphocyte activation gene 3 protein from Homo sapiens (Human).